The chain runs to 149 residues: Nucleoside diphosphate kinase (149 aa).

The ATP site is built by Lys-9, Phe-57, Arg-85, Thr-91, Arg-102, and Asn-112. His-115 serves as the catalytic Pros-phosphohistidine intermediate.

Belongs to the NDK family. As to quaternary structure, homotetramer. It depends on Mg(2+) as a cofactor.

It is found in the cytoplasm. It catalyses the reaction dZDP + ATP = dZTP + ADP. The enzyme catalyses a 2'-deoxyribonucleoside 5'-diphosphate + ATP = a 2'-deoxyribonucleoside 5'-triphosphate + ADP. It carries out the reaction a ribonucleoside 5'-diphosphate + ATP = a ribonucleoside 5'-triphosphate + ADP. It functions in the pathway purine metabolism. Functionally, major role in the synthesis of nucleoside triphosphates other than ATP. The ATP gamma phosphate is transferred to the NDP beta phosphate via a ping-pong mechanism, using a phosphorylated active-site intermediate. Its function is as follows. (Microbial infection) Catalyzes the phosphorylation of dZDP to dZTP, when the bacterium is infected by a phage that produces the substrate for the synthesis of dZTP (2- amino-2'-deoxyadenosine 5'-triphosphate), which is then used by the phage as a DNA polymerase substrate. In Picosynechococcus sp. (strain ATCC 27264 / PCC 7002 / PR-6) (Agmenellum quadruplicatum), this protein is Nucleoside diphosphate kinase.